The chain runs to 318 residues: BES1/BZR1 homolog protein 2 (318 aa).

Residues 1 to 13 show a composition bias toward gly residues; it reads MAAGGGGGGGGSS. Disordered stretches follow at residues 1–34, 84–133, 166–195, and 209–231; these read MAAG…RRRR, FKPP…PSPS, NSAP…PNGG, and APSS…CDES. A required for DNA-binding region spans residues 16–97; that stretch reads RTPTWKEREN…ASDISGTPTN (82 aa). The segment covering 91–101 has biased composition (polar residues); it reads ISGTPTNFSTN. The segment covering 102-133 has biased composition (low complexity); it reads SSIQPSPQSSAFPSPAPSYHGSPVSSSFPSPS.

This sequence belongs to the BZR/LAT61 family. In terms of processing, phosphorylated. Phosphorylation increases protein degradation.

The sequence is that of BES1/BZR1 homolog protein 2 (BEH2) from Arabidopsis thaliana (Mouse-ear cress).